A 659-amino-acid chain; its full sequence is Exocyst complex component 5 (659 aa).

Residues 1–58 (MRFEEEIGSLQMLCDQFQNKINTLEKQMNEEKKDYVQKLHRLHEKNGEAIDKMKQLDH) are a coiled coil.

Belongs to the SEC10 family. As to quaternary structure, the exocyst complex is composed of sec-3/exoc1, sec-5/exoc2, sec-6/exoc3, sec-8/exoc4, sec-10/exoc5, sec-15/exoc6, exo-70/exoc7 and exo-84/exoc8.

Functionally, component of the exocyst complex involved in the docking of exocytic vesicles with fusion sites on the plasma membrane. This is Exocyst complex component 5 (sec-10) from Caenorhabditis elegans.